We begin with the raw amino-acid sequence, 312 residues long: Homoserine kinase (312 aa).

An ATP-binding site is contributed by 91-101 (PVASGLGSSAC).

This sequence belongs to the GHMP kinase family. Homoserine kinase subfamily.

Its subcellular location is the cytoplasm. The enzyme catalyses L-homoserine + ATP = O-phospho-L-homoserine + ADP + H(+). Its pathway is amino-acid biosynthesis; L-threonine biosynthesis; L-threonine from L-aspartate: step 4/5. Its function is as follows. Catalyzes the ATP-dependent phosphorylation of L-homoserine to L-homoserine phosphate. This Blochmanniella pennsylvanica (strain BPEN) protein is Homoserine kinase.